The following is a 182-amino-acid chain: Troponin I, fast skeletal muscle (182 aa).

At G2 the chain carries N-acetylglycine. Positions 2 to 48 (GDEEKRNRAITARRQHLKSVMLQIAATELEKEESRREAEKQNYLAEH) are involved in binding TNC. At T12 the chain carries Phosphothreonine. The tract at residues 97–117 (NQKLFDLRGKFKRPPLRRVRM) is involved in binding TNC and actin. A Phosphoserine modification is found at S118.

This sequence belongs to the troponin I family. In terms of assembly, binds to actin and tropomyosin.

Functionally, troponin I is the inhibitory subunit of troponin, the thin filament regulatory complex which confers calcium-sensitivity to striated muscle actomyosin ATPase activity. The polypeptide is Troponin I, fast skeletal muscle (TNNI2) (Homo sapiens (Human)).